The following is a 340-amino-acid chain: Dihydroorotate dehydrogenase (quinone) (340 aa).

Residues 61–65 (AGLDK) and Thr-85 contribute to the FMN site. Residue Lys-65 participates in substrate binding. Residue 110 to 114 (NRMGF) coordinates substrate. Positions 138 and 171 each coordinate FMN. Asn-171 serves as a coordination point for substrate. The Nucleophile role is filled by Ser-174. Substrate is bound at residue Asn-176. FMN is bound by residues Lys-216 and Thr-244. Position 245-246 (245-246 (NT)) interacts with substrate. FMN-binding positions include Gly-267, Gly-296, and 317 to 318 (YS).

Belongs to the dihydroorotate dehydrogenase family. Type 2 subfamily. Monomer. FMN serves as cofactor.

It is found in the cell membrane. It catalyses the reaction (S)-dihydroorotate + a quinone = orotate + a quinol. It participates in pyrimidine metabolism; UMP biosynthesis via de novo pathway; orotate from (S)-dihydroorotate (quinone route): step 1/1. Its function is as follows. Catalyzes the conversion of dihydroorotate to orotate with quinone as electron acceptor. The chain is Dihydroorotate dehydrogenase (quinone) from Ectopseudomonas mendocina (strain ymp) (Pseudomonas mendocina).